The sequence spans 433 residues: Steroid hormone receptor ERR2 (433 aa).

Positions 1–38 (MSSDDRHLGSSCGSFIKTEPSSPSSGIDALSHHSPSGS) are disordered. The span at 28-38 (DALSHHSPSGS) shows a compositional bias: low complexity. The segment at 93-211 (YMLNAIPKRL…SPPAKKPLTK (119 aa)) is interaction with NANOG. The nuclear receptor DNA-binding region spans 100–186 (KRLCLVCGDI…RVRGGRQKYK (87 aa)). NR C4-type zinc fingers lie at residues 103–123 (CLVC…CEAC) and 139–163 (CPAT…FMKC). The interval 203–433 (PPAKKPLTKI…LFLEMLEAKV (231 aa)) is essential for ESRRB transcriptional activity and interaction with NCOA3. An NR LBD domain is found at 208–432 (PLTKIVSYLL…KLFLEMLEAK (225 aa)).

This sequence belongs to the nuclear hormone receptor family. NR3 subfamily. As to quaternary structure, binds DNA as a monomer. Interacts with NR0B1; represses ESRRB activity at the GATA6 promoter. Interacts with NANOG; reciprocally modulates their transcriptional activities and activates POU5F1 expression. Interacts with NCOA3; mediates the interaction between ESRRB and RNA polymerase II complexes and allows NCOA3 corecruitment to ESRRB, KLF4, NANOG, and SOX2 enhancer regions to trigger ESRRB-dependent gene activation involved in self-renewal and pluripotency. Interacts with KDM1A; co-occupes the core set of ESRRB targets including ELF5 and EOMES. Interacts with the multiprotein complex Integrator, at least composed of INTS1, INTS2, INTS3, INTS4, INTS5, INTS6, INTS7, INTS8, INTS9/RC74, INTS10, INTS11/CPSF3L and INTS12; ESRRB is probably not a core component of the integrator complex and associates to integrator via its interaction with INTS1 and INTS9; attracts the transcriptional machinery. Interacts with JARID2. Interacts with POU5F1; recruits ESRRB near the POU5F1-SOX2 element in the NANOG proximal promoter leading to activation of NANOG expression; the interaction is DNA independent. Interacts with NFE2L2; represses NFE2L2 transcriptional activity. Isoform 1 interacts with ESR1. Post-translationally, acetylated by PCAF/KAT2 (in vitro).

Its subcellular location is the nucleus. The protein localises to the cytoplasm. The protein resides in the chromosome. Its function is as follows. Transcription factor that binds a canonical ESRRB recognition (ERRE) sequence 5'TCAAGGTCA-3' localized on promoter and enhancer of targets genes regulating their expression or their transcription activity. Plays a role, in a LIF-independent manner, in maintainance of self-renewal and pluripotency of embryonic and trophoblast stem cells through different signaling pathways including FGF signaling pathway and Wnt signaling pathways. Involved in morula development (2-16 cells embryos) by acting as a regulator at the 8-cell stage. Upon FGF signaling pathway activation, interacts with KDM1A by directly binding to enhancer site of ELF5 and EOMES and activating their transcription leading to self-renewal of trophoblast stem cells. Also regulates expression of multiple rod-specific genes and is required for survival of this cell type. Plays a role as transcription factor activator of GATA6, NR0B1, POU5F1 and PERM1. Plays a role as transcription factor repressor of NFE2L2 transcriptional activity and ESR1 transcriptional activity. During mitosis remains bound to a subset of interphase target genes, including pluripotency regulators, through the canonical ESRRB recognition (ERRE) sequence, leading to their transcriptional activation in early G1 phase. Can coassemble on structured DNA elements with other transcription factors like SOX2, POU5F1, KDM1A and NCOA3 to trigger ESRRB-dependent gene activation. This mechanism, in the case of SOX2 corecruitment prevents the embryonic stem cells (ESCs) to epiblast stem cells (EpiSC) transition through positive regulation of NR0B1 that inhibits the EpiSC transcriptional program. Also plays a role inner ear development by controlling expression of ion channels and transporters and in early placentation. Functionally, transcription factor that binds a canonical ESRRB recognition (ERRE) sequence 5'TCAAGGTCA-3' localized on promoter and enhancer of targets genes regulating their expression or their transcription activity. Positively regulates ESR1 transcriptional activity upon E2 stimulation. This is Steroid hormone receptor ERR2 from Homo sapiens (Human).